A 184-amino-acid chain; its full sequence is ATP synthase subunit b (184 aa).

Residues 19–39 (IIVGVILVLLLTWLIAKAVVP) form a helical membrane-spanning segment.

This sequence belongs to the ATPase B chain family. F-type ATPases have 2 components, F(1) - the catalytic core - and F(0) - the membrane proton channel. F(1) has five subunits: alpha(3), beta(3), gamma(1), delta(1), epsilon(1). F(0) has three main subunits: a(1), b(2) and c(10-14). The alpha and beta chains form an alternating ring which encloses part of the gamma chain. F(1) is attached to F(0) by a central stalk formed by the gamma and epsilon chains, while a peripheral stalk is formed by the delta and b chains.

The protein resides in the cell membrane. F(1)F(0) ATP synthase produces ATP from ADP in the presence of a proton or sodium gradient. F-type ATPases consist of two structural domains, F(1) containing the extramembraneous catalytic core and F(0) containing the membrane proton channel, linked together by a central stalk and a peripheral stalk. During catalysis, ATP synthesis in the catalytic domain of F(1) is coupled via a rotary mechanism of the central stalk subunits to proton translocation. Its function is as follows. Component of the F(0) channel, it forms part of the peripheral stalk, linking F(1) to F(0). The polypeptide is ATP synthase subunit b (Cutibacterium acnes (strain DSM 16379 / KPA171202) (Propionibacterium acnes)).